A 194-amino-acid polypeptide reads, in one-letter code: RxLR effector protein Avh240 (194 aa).

The first 23 residues, 1–23, serve as a signal peptide directing secretion; the sequence is MRPYFTLLLALAFILACTNLVEA. A RxLR-dEER motif is present at residues 38-57; sequence RHLRTAVASVVDLPDDEDER. Residues 58-108 are host plasma membrane-binding; sequence LLGYNTVQLWRMRRTANKLMNGKLTTQKEAALKKWMASQQDKFLAKWLKSS.

This sequence belongs to the RxLR effector family. As to quaternary structure, homodimer. Interacts with host soybean aspartic protease AP1.

It localises to the secreted. It is found in the host cell membrane. Its function is as follows. Effector that suppresses plant defense responses during the early stages of pathogen infection. Suppresses cell death induced by effectors and PAMPs in plant hosts. Avh240 dimerizes and localizes at the plasma membrane to interfere with aspartic protease AP1 secretion, which presents an effective mechanism by which effector proteins suppress plant apoplastic immunity. The sequence is that of RxLR effector protein Avh240 from Phytophthora sojae (Soybean stem and root rot agent).